Reading from the N-terminus, the 816-residue chain is Phosphatidylinositol 4-kinase beta (816 aa).

3 disordered regions span residues Met-1 to Leu-30, Glu-101 to Arg-120, and Arg-250 to Ser-318. Gly-2 carries the N-acetylglycine modification. The interval Gly-2 to Ile-68 is interaction with ACBD3. Residues Thr-10–Leu-30 show a composition bias toward low complexity. The PIK helical domain maps to Cys-52–Ser-242. Ser-258 carries the post-translational modification Phosphoserine. The residue at position 263 (Thr-263) is a Phosphothreonine. A phosphoserine mark is found at Ser-266, Ser-275, Ser-277, Ser-284, and Ser-294. 2 stretches are compositionally biased toward polar residues: residues Asp-278–Lys-297 and Ser-306–Ser-318. Ser-428 carries the phosphoserine modification. Thr-438 is subject to Phosphothreonine. Phosphoserine is present on Ser-511. A phosphothreonine mark is found at Thr-517 and Thr-519. The region spanning Glu-535–Thr-801 is the PI3K/PI4K catalytic domain. Positions Val-541–Gly-547 are G-loop. The tract at residues Gln-668–Asn-676 is catalytic loop. The interval His-687–Thr-711 is activation loop.

Belongs to the PI3/PI4-kinase family. Type III PI4K subfamily. In terms of assembly, interacts with ARF1 and ARF3 in the Golgi complex, but not with ARF4, ARF5 or ARF6. Interacts with NCS1/FREQ in a calcium-independent manner. Interacts with CALN1/CABP8 and CALN2/CABP7; in a calcium-dependent manner; this interaction competes with NCS1/FREQ binding. Interacts with ACBD3. Interacts with ARMH3, YWHAB, YWHAE, YWHAG, YWHAH, YWHAQ, YWHAZ and SFN. Interacts with GGA2 (via VHS domain); the interaction is important for PI4KB location at the Golgi apparatus membrane. Interacts with ATG9A. It depends on Mg(2+) as a cofactor. Mn(2+) serves as cofactor.

Its subcellular location is the endomembrane system. It localises to the mitochondrion outer membrane. The protein resides in the rough endoplasmic reticulum membrane. It is found in the golgi apparatus. The protein localises to the golgi apparatus membrane. The enzyme catalyses a 1,2-diacyl-sn-glycero-3-phospho-(1D-myo-inositol) + ATP = a 1,2-diacyl-sn-glycero-3-phospho-(1D-myo-inositol 4-phosphate) + ADP + H(+). Its activity is regulated as follows. Inhibited by wortmannin. Increased kinase activity upon interaction with NCS1/FREQ. Its function is as follows. Phosphorylates phosphatidylinositol (PI) in the first committed step in the production of the second messenger inositol-1,4,5,-trisphosphate (PIP). May regulate Golgi disintegration/reorganization during mitosis, possibly via its phosphorylation. Involved in Golgi-to-plasma membrane trafficking. May play an important role in the inner ear development. This Mus musculus (Mouse) protein is Phosphatidylinositol 4-kinase beta (Pi4kb).